The following is a 214-amino-acid chain: Riboflavin kinase (214 aa).

A disordered region spans residues 1-27; the sequence is MRPDRPRDPVTGPDEGPESPYPIRMSG. Positions 44 and 46 each coordinate Mg(2+). The Nucleophile role is filled by Glu-101.

Belongs to the flavokinase family. Zn(2+) is required as a cofactor. Requires Mg(2+) as cofactor.

The enzyme catalyses riboflavin + ATP = FMN + ADP + H(+). The protein operates within cofactor biosynthesis; FMN biosynthesis; FMN from riboflavin (ATP route): step 1/1. Catalyzes the phosphorylation of riboflavin (vitamin B2) to form flavin mononucleotide (FMN) coenzyme. The sequence is that of Riboflavin kinase (fmn1) from Aspergillus niger (strain ATCC MYA-4892 / CBS 513.88 / FGSC A1513).